The following is a 154-amino-acid chain: Protein X (154 aa).

The mitochondrial targeting sequence stretch occupies residues Pro-68–Phe-117.

The protein belongs to the orthohepadnavirus protein X family. As to quaternary structure, may form homodimer. May interact with host CEBPA, CFLAR, CREB1, DDB1, E4F1, HBXIP, HSPD1/HSP60, NFKBIA, POLR2E and SMAD4. Interacts with host SMC5-SMC6 complex and induces its degradation. Interacts with host TRPC4AP; leading to prevent ubiquitination of TRPC4AP. Interacts with host PLSCR1; this interaction promotes ubiquitination and degradation of HBx and impairs HBx-mediated cell proliferation. A fraction may be phosphorylated in insect cells and HepG2 cells, a human hepatoblastoma cell line. Phosphorylated in vitro by host protein kinase C or mitogen-activated protein kinase. N-acetylated in insect cells.

It localises to the host cytoplasm. The protein resides in the host nucleus. It is found in the host mitochondrion. Its function is as follows. Multifunctional protein that plays a role in silencing host antiviral defenses and promoting viral transcription. Does not seem to be essential for HBV infection. May be directly involved in development of cirrhosis and liver cancer (hepatocellular carcinoma). Most of cytosolic activities involve modulation of cytosolic calcium. The effect on apoptosis is controversial depending on the cell types in which the studies have been conducted. May induce apoptosis by localizing in mitochondria and causing loss of mitochondrial membrane potential. May also modulate apoptosis by binding host CFLAR, a key regulator of the death-inducing signaling complex (DISC). Promotes viral transcription by using the host E3 ubiquitin ligase DDB1 to target the SMC5-SMC6 complex to proteasomal degradation. This host complex would otherwise bind to viral episomal DNA, and prevents its transcription. Moderately stimulates transcription of many different viral and cellular transcription elements. Promoters and enhancers stimulated by HBx contain DNA binding sites for NF-kappa-B, AP-1, AP-2, c-EBP, ATF/CREB, or the calcium-activated factor NF-AT. This chain is Protein X, found in Hepatitis B virus genotype B1 subtype adw (isolate Japan/pJDW233/1988) (HBV-B).